A 591-amino-acid chain; its full sequence is Dihydroxyacetone kinase 2 (591 aa).

One can recognise a DhaK domain in the interval 8-344 (SDGNIVTPYL…FDYPTTASGW (337 aa)). The interval 40 to 59 (ASAPNSGNPPKVSLVSGGGS) is disordered. Substrate is bound by residues 58–61 (GSGH), Lys-109, and Asp-114. Catalysis depends on His-223, which acts as the Tele-hemiaminal-histidine intermediate. In terms of domain architecture, DhaL spans 384–587 (DTFAKILLAG…LAALLDGFVT (204 aa)). Residues 413 to 416 (DGDC), 459 to 460 (TS), 511 to 512 (TL), and 572 to 574 (DPG) each bind ATP.

Belongs to the dihydroxyacetone kinase (DAK) family.

The catalysed reaction is dihydroxyacetone + ATP = dihydroxyacetone phosphate + ADP + H(+). It carries out the reaction D-glyceraldehyde + ATP = D-glyceraldehyde 3-phosphate + ADP + H(+). The protein operates within polyol metabolism; glycerol fermentation; glycerone phosphate from glycerol (oxidative route): step 2/2. Its function is as follows. Catalyzes both the phosphorylation of dihydroxyacetone and of glyceraldehyde. This chain is Dihydroxyacetone kinase 2 (DAK2), found in Saccharomyces cerevisiae (strain ATCC 204508 / S288c) (Baker's yeast).